The chain runs to 348 residues: Probable UDP-arabinopyranose mutase 5 (348 aa).

Residues 100–102 carry the DXD motif motif; that stretch reads DDD. An N-linked (Glc...) arginine glycan is attached at Arg148.

It belongs to the RGP family. Heteromers with RGP1 and RGP2. Mn(2+) serves as cofactor. Mg(2+) is required as a cofactor. Reversibly glycosylated in vitro by UDP-glucose, UDP-xylose and UDP-galactose, but not UDP-mannose. As to expression, widely expressed at low levels.

It is found in the cytoplasm. The protein resides in the cytosol. The protein localises to the golgi apparatus. The catalysed reaction is UDP-beta-L-arabinofuranose = UDP-beta-L-arabinopyranose. Its function is as follows. Probable UDP-L-arabinose mutase involved in the biosynthesis of cell wall non-cellulosic polysaccharides. The polypeptide is Probable UDP-arabinopyranose mutase 5 (Arabidopsis thaliana (Mouse-ear cress)).